The following is a 63-amino-acid chain: uncharacterized protein (63 aa).

The segment covering 1-17 has biased composition (basic and acidic residues); sequence MRYTDSRKLTPETDANH. A disordered region spans residues 1–32; it reads MRYTDSRKLTPETDANHKTASPQPIRRISSQT. Over residues 18 to 32 the composition is skewed to polar residues; it reads KTASPQPIRRISSQT.

It to Y.enterocolitica HemP.

This is an uncharacterized protein from Escherichia coli (strain K12).